Reading from the N-terminus, the 807-residue chain is Glycerol-3-phosphate acyltransferase (807 aa).

Positions 305 to 310 match the HXXXXD motif motif; sequence CHRSHM.

Belongs to the GPAT/DAPAT family.

The protein localises to the cell inner membrane. The catalysed reaction is sn-glycerol 3-phosphate + an acyl-CoA = a 1-acyl-sn-glycero-3-phosphate + CoA. The protein operates within phospholipid metabolism; CDP-diacylglycerol biosynthesis; CDP-diacylglycerol from sn-glycerol 3-phosphate: step 1/3. This Vibrio atlanticus (strain LGP32) (Vibrio splendidus (strain Mel32)) protein is Glycerol-3-phosphate acyltransferase.